We begin with the raw amino-acid sequence, 149 residues long: uncharacterized protein (149 aa).

The disordered stretch occupies residues 1–103; the sequence is MFGLKVKNAE…SPTQGSRLRH (103 aa). Basic and acidic residues predominate over residues 7–18; that stretch reads KNAEADTAKSNE. The span at 26–41 shows a compositional bias: low complexity; sequence TGSSTTSGSGQSTQRG. The span at 61 to 72 shows a compositional bias: polar residues; sequence GSQGNSGDQGTE.

This sequence belongs to the adhesin P1 family.

This is an uncharacterized protein from Mycoplasma pneumoniae (strain ATCC 29342 / M129 / Subtype 1) (Mycoplasmoides pneumoniae).